Consider the following 701-residue polypeptide: Low-density lipoprotein receptor-related protein 12 (701 aa).

At 1 to 334 the chain is on the extracellular side; sequence GKSEEPNCAC…ENCPVIVPTR (334 aa). 2 consecutive LDL-receptor class A domains span residues 7-43 and 56-97; these read NCAC…EICA and PCAY…IDCD. Cystine bridges form between Cys-8/Cys-20, Cys-15/Cys-33, Cys-27/Cys-42, Cys-57/Cys-74, Cys-64/Cys-87, Cys-81/Cys-96, and Cys-101/Cys-127. The region spanning 101–214 is the CUB domain; it reads CGQWLKYFYG…RGFNATYQVD (114 aa). 2 N-linked (GlcNAc...) asparagine glycosylation sites follow: Asn-126 and Asn-208. LDL-receptor class A domains lie at 216-253, 254-291, and 292-328; these read FCLP…INCT, MCQK…KNCF, and FCQP…ENCP. 9 cysteine pairs are disulfide-bonded: Cys-217-Cys-230, Cys-224-Cys-243, Cys-237-Cys-252, Cys-255-Cys-268, Cys-262-Cys-281, Cys-275-Cys-290, Cys-293-Cys-305, Cys-300-Cys-318, and Cys-312-Cys-327. Asn-251 carries an N-linked (GlcNAc...) asparagine glycan. Asn-283 is a glycosylation site (N-linked (GlcNAc...) asparagine). The chain crosses the membrane as a helical span at residues 335–355; sequence VITAAVIGSLICGLLLVIALG. Over 356-701 the chain is Cytoplasmic; it reads CTCKLYSLRM…TSDDEALLLC (346 aa). Disordered stretches follow at residues 465–520, 535–565, 590–612, and 643–665; these read ADGD…LPQK, ASSS…SPAR, SSVS…REDD, and DQGQ…SNRD. Composition is skewed to polar residues over residues 590 to 599 and 643 to 656; these read SSVSQNQSPL and DQGQ…SATN.

Belongs to the LDLR family. As to quaternary structure, may interact with RACK1, ZFYVE9 and NMRK2.

Its subcellular location is the membrane. The protein resides in the coated pit. Functionally, probable receptor, which may be involved in the internalization of lipophilic molecules and/or signal transduction. May act as a tumor suppressor. This Macaca fascicularis (Crab-eating macaque) protein is Low-density lipoprotein receptor-related protein 12 (LRP12).